The sequence spans 242 residues: Glucosamine-6-phosphate deaminase (242 aa).

Asp67 acts as the Proton acceptor; for enolization step in catalysis. Asn137 functions as the For ring-opening step in the catalytic mechanism. Residue His139 is the Proton acceptor; for ring-opening step of the active site. Residue Glu144 is the For ring-opening step of the active site.

It belongs to the glucosamine/galactosamine-6-phosphate isomerase family. NagB subfamily.

The enzyme catalyses alpha-D-glucosamine 6-phosphate + H2O = beta-D-fructose 6-phosphate + NH4(+). The protein operates within amino-sugar metabolism; N-acetylneuraminate degradation; D-fructose 6-phosphate from N-acetylneuraminate: step 5/5. Functionally, catalyzes the reversible isomerization-deamination of glucosamine 6-phosphate (GlcN6P) to form fructose 6-phosphate (Fru6P) and ammonium ion. The polypeptide is Glucosamine-6-phosphate deaminase (Staphylococcus saprophyticus subsp. saprophyticus (strain ATCC 15305 / DSM 20229 / NCIMB 8711 / NCTC 7292 / S-41)).